The following is a 458-amino-acid chain: Argininosuccinate lyase (458 aa).

It belongs to the lyase 1 family. Argininosuccinate lyase subfamily.

Its subcellular location is the cytoplasm. It carries out the reaction 2-(N(omega)-L-arginino)succinate = fumarate + L-arginine. It functions in the pathway amino-acid biosynthesis; L-arginine biosynthesis; L-arginine from L-ornithine and carbamoyl phosphate: step 3/3. The sequence is that of Argininosuccinate lyase from Actinobacillus pleuropneumoniae serotype 3 (strain JL03).